Reading from the N-terminus, the 734-residue chain is Elongation factor G, mitochondrial (734 aa).

Residues 1–32 (MTSFLTSRFGGLALRNVMNNKNGINSFGLRCF) constitute a mitochondrion transit peptide. One can recognise a tr-type G domain in the interval 38–318 (SGLRNIGISA…GVIKYLPSPN (281 aa)). Residues 47–54 (AHIDSGKT), 114–118 (DTPGH), and 168–171 (NKLD) each bind GTP.

The protein belongs to the TRAFAC class translation factor GTPase superfamily. Classic translation factor GTPase family. EF-G/EF-2 subfamily.

Its subcellular location is the mitochondrion. The catalysed reaction is GTP + H2O = GDP + phosphate + H(+). It participates in protein biosynthesis; polypeptide chain elongation. Its function is as follows. Mitochondrial GTPase that catalyzes the GTP-dependent ribosomal translocation step during translation elongation. During this step, the ribosome changes from the pre-translocational (PRE) to the post-translocational (POST) state as the newly formed A-site-bound peptidyl-tRNA and P-site-bound deacylated tRNA move to the P and E sites, respectively. Catalyzes the coordinated movement of the two tRNA molecules, the mRNA and conformational changes in the ribosome. The protein is Elongation factor G, mitochondrial (gfm1) of Dictyostelium discoideum (Social amoeba).